Reading from the N-terminus, the 105-residue chain is Probable guanidinium efflux system subunit GdnD (105 aa).

A run of 4 helical transmembrane segments spans residues 1–21 (MLHW…VALM), 32–52 (WVLL…YAME), 59–79 (AYAV…ILFY), and 85–105 (AKRI…KILS).

The protein belongs to the drug/metabolite transporter (DMT) superfamily. Small multidrug resistance (SMR) (TC 2.A.7.1) family. YkkC/YkkD subfamily. The efflux pump is composed of GdnC and GdnD.

It localises to the cell membrane. Functionally, probably involved in guanidinium transport. In vitro, confers resistance to a broad range of toxic compounds such as cationic dyes, neutral and anionic antimicrobials. In Bacillus subtilis (strain 168), this protein is Probable guanidinium efflux system subunit GdnD.